The following is a 132-amino-acid chain: Small ribosomal subunit protein uS8 (132 aa).

It belongs to the universal ribosomal protein uS8 family. As to quaternary structure, part of the 30S ribosomal subunit. Contacts proteins S5 and S12.

In terms of biological role, one of the primary rRNA binding proteins, it binds directly to 16S rRNA central domain where it helps coordinate assembly of the platform of the 30S subunit. This is Small ribosomal subunit protein uS8 from Syntrophotalea carbinolica (strain DSM 2380 / NBRC 103641 / GraBd1) (Pelobacter carbinolicus).